A 228-amino-acid chain; its full sequence is Deoxyribose-phosphate aldolase (228 aa).

The Proton donor/acceptor role is filled by Asp-93. Catalysis depends on Lys-159, which acts as the Schiff-base intermediate with acetaldehyde. Lys-188 serves as the catalytic Proton donor/acceptor.

It belongs to the DeoC/FbaB aldolase family. DeoC type 1 subfamily.

It localises to the cytoplasm. The catalysed reaction is 2-deoxy-D-ribose 5-phosphate = D-glyceraldehyde 3-phosphate + acetaldehyde. The protein operates within carbohydrate degradation; 2-deoxy-D-ribose 1-phosphate degradation; D-glyceraldehyde 3-phosphate and acetaldehyde from 2-deoxy-alpha-D-ribose 1-phosphate: step 2/2. Catalyzes a reversible aldol reaction between acetaldehyde and D-glyceraldehyde 3-phosphate to generate 2-deoxy-D-ribose 5-phosphate. The protein is Deoxyribose-phosphate aldolase of Carboxydothermus hydrogenoformans (strain ATCC BAA-161 / DSM 6008 / Z-2901).